The chain runs to 311 residues: Ribosomal RNA small subunit methyltransferase H (311 aa).

Residues 33-35, Asp-53, Phe-77, Asp-98, and Gln-105 each bind S-adenosyl-L-methionine; that span reads GGH.

This sequence belongs to the methyltransferase superfamily. RsmH family.

Its subcellular location is the cytoplasm. The enzyme catalyses cytidine(1402) in 16S rRNA + S-adenosyl-L-methionine = N(4)-methylcytidine(1402) in 16S rRNA + S-adenosyl-L-homocysteine + H(+). In terms of biological role, specifically methylates the N4 position of cytidine in position 1402 (C1402) of 16S rRNA. The sequence is that of Ribosomal RNA small subunit methyltransferase H from Thiobacillus denitrificans (strain ATCC 25259 / T1).